Here is a 287-residue protein sequence, read N- to C-terminus: Very long chain fatty acid elongase 4 (287 aa).

3 helical membrane passes run 33-53 (ILVY…EHIM), 64-84 (PFVV…YSCV), and 115-135 (FWVF…VFLV). A HxxHH motif motif is present at residues 145–149 (HWYHH). Histidine 148 acts as the Nucleophile in catalysis. A run of 4 helical transmembrane segments spans residues 150–170 (LTVA…GLWF), 172–192 (TMNY…ACGM), 199–219 (IAPF…LIVL), and 241–261 (LGLV…GKLY).

This sequence belongs to the ELO family.

It localises to the membrane. It catalyses the reaction a very-long-chain acyl-CoA + malonyl-CoA + H(+) = a very-long-chain 3-oxoacyl-CoA + CO2 + CoA. Its function is as follows. Involved in the synthesis of fatty acids. Elongates C16:0 and C18:0 fatty acids to C26:0, with C24:0 being the main product. The protein is Very long chain fatty acid elongase 4 of Trypanosoma cruzi (strain CL Brener).